The following is a 359-amino-acid chain: tRNA-specific 2-thiouridylase MnmA (359 aa).

ATP-binding positions include 9-16 (GISGGVDS) and M35. Residues 95-97 (NPD) form an interaction with target base in tRNA region. The active-site Nucleophile is C100. A disulfide bridge links C100 with C197. G124 lines the ATP pocket. The segment at 147 to 149 (KDQ) is interaction with tRNA. C197 acts as the Cysteine persulfide intermediate in catalysis. Residues 309-310 (RY) form an interaction with tRNA region.

It belongs to the MnmA/TRMU family.

The protein localises to the cytoplasm. It carries out the reaction S-sulfanyl-L-cysteinyl-[protein] + uridine(34) in tRNA + AH2 + ATP = 2-thiouridine(34) in tRNA + L-cysteinyl-[protein] + A + AMP + diphosphate + H(+). Catalyzes the 2-thiolation of uridine at the wobble position (U34) of tRNA, leading to the formation of s(2)U34. The chain is tRNA-specific 2-thiouridylase MnmA from Francisella tularensis subsp. holarctica (strain FTNF002-00 / FTA).